Consider the following 87-residue polypeptide: UPF0250 protein Ent638_1166 (87 aa).

The protein belongs to the UPF0250 family.

This Enterobacter sp. (strain 638) protein is UPF0250 protein Ent638_1166.